The chain runs to 147 residues: MKVILLKDVKKLGKKDDVVNVSDGYARNFLFPRKLALEAKESNLNLLNNKKEAERKQKLAELEEAQKLAEELKNQELILKVKSGDNGKLFGSITGKDISDELKKKFKLDIDRRKINVENIRQLGVYDVEIKLYPEVSTKIKVKIEDI.

Belongs to the bacterial ribosomal protein bL9 family.

Functionally, binds to the 23S rRNA. This chain is Large ribosomal subunit protein bL9, found in Clostridium tetani (strain Massachusetts / E88).